The primary structure comprises 184 residues: Photosystem I assembly protein Ycf4 (184 aa).

2 helical membrane-spanning segments follow: residues 20–42 (VNLC…GFSS) and 57–79 (IAFI…LGLY).

This sequence belongs to the Ycf4 family.

The protein resides in the plastid. The protein localises to the chloroplast thylakoid membrane. Functionally, seems to be required for the assembly of the photosystem I complex. The protein is Photosystem I assembly protein Ycf4 of Adiantum capillus-veneris (Maidenhair fern).